The sequence spans 71 residues: Permeability factor 2 (71 aa).

2 cysteine pairs are disulfide-bonded: Cys7/Cys33 and Cys9/Cys49.

It belongs to the intercrine alpha (chemokine CxC) family. Homodimer.

It is found in the secreted. In terms of biological role, has chemotactic activity for neutrophils. This is Permeability factor 2 from Oryctolagus cuniculus (Rabbit).